The chain runs to 369 residues: Actin-related protein T3 (369 aa).

This sequence belongs to the actin family. In terms of assembly, interacts with PFN3. As to expression, testis specific (at protein level). Expressed specifically in haploid germ cells.

It is found in the cytoplasm. It localises to the cytoskeleton. Its subcellular location is the nucleus. This chain is Actin-related protein T3 (Actrt3), found in Mus musculus (Mouse).